A 75-amino-acid chain; its full sequence is Small ribosomal subunit protein eS17 (75 aa).

This sequence belongs to the eukaryotic ribosomal protein eS17 family.

This chain is Small ribosomal subunit protein eS17, found in Thermoplasma volcanium (strain ATCC 51530 / DSM 4299 / JCM 9571 / NBRC 15438 / GSS1).